The chain runs to 445 residues: Phosphoglucosamine mutase (445 aa).

S102 functions as the Phosphoserine intermediate in the catalytic mechanism. Mg(2+)-binding residues include S102, D241, D243, and D245. S102 carries the phosphoserine modification.

It belongs to the phosphohexose mutase family. It depends on Mg(2+) as a cofactor. Post-translationally, activated by phosphorylation.

The catalysed reaction is alpha-D-glucosamine 1-phosphate = D-glucosamine 6-phosphate. Catalyzes the conversion of glucosamine-6-phosphate to glucosamine-1-phosphate. The protein is Phosphoglucosamine mutase of Escherichia coli O7:K1 (strain IAI39 / ExPEC).